Consider the following 712-residue polypeptide: Cyclolysin secretion/processing ATP-binding protein CyaB (712 aa).

Residues 7 to 128 form the Peptidase C39 domain; sequence QCASVPDSGL…ALWAGELLLC (122 aa). Residues 157–439 form the ABC transmembrane type-1 domain; the sequence is IGEVLLISLV…LAQLWNDFQQ (283 aa). Transmembrane regions (helical) follow at residues 160 to 180, 194 to 214, 272 to 292, 298 to 318, 367 to 387, and 390 to 410; these read VLLI…FFQV, LNVI…LTGI, AVTV…MFFY, LVVL…TPVL, VAAG…VTLI, and LVAL…RMTV. Residues 471–706 enclose the ABC transporter domain; the sequence is IELDRVSFRY…GGLYARLQAL (236 aa). ATP is bound at residue 505–512; it reads GRSGSGKS.

This sequence belongs to the ABC transporter superfamily. Cyclolysin exporter (TC 3.A.1.109.2) family.

The protein resides in the cell membrane. Involved in the export of calmodulin-sensitive adenylate cyclase-hemolysin (cyclolysin). This Bordetella pertussis (strain ATCC 9797 / DSM 5571 / CCUG 30873 / LMG 14455 / NCTC 10739 / 18323) protein is Cyclolysin secretion/processing ATP-binding protein CyaB (cyaB).